The sequence spans 453 residues: Serine/threonine-protein kinase VRK3 (453 aa).

The segment at 30–123 (EDGGTQSAVT…QSPQTLKRTR (94 aa)) is disordered. A compositionally biased stretch (polar residues) spans 33 to 46 (GTQSAVTPHVSSVP). The Nuclear localization signal motif lies at 49–64 (RRDLNSSFETSPKKVK). S54, S55, S59, S82, S83, and S108 each carry phosphoserine. Over residues 81–101 (DSSGSDNTLTSPDRATGTRSR) the composition is skewed to polar residues. Positions 109–123 (PLSNRQSPQTLKRTR) are enriched in polar residues. Residues 125-436 (TTSLQALATG…TLRNSLEALL (312 aa)) enclose the Protein kinase domain.

It belongs to the protein kinase superfamily. CK1 Ser/Thr protein kinase family. VRK subfamily. In terms of assembly, interacts with DUSP3. Interacts with RAN. Interacts with HSP70/HSPA1A. Phosphorylated at Ser-108 by CDK5; leading to protection of the cell against H2O2-induced apoptosis. In terms of processing, ubiquitinated by RNF144A. As to expression, expressed in liver, kidney, muscle, thymus, and bone marrow. Weakly expressed in spleen.

Its subcellular location is the nucleus. It localises to the cytoplasm. The enzyme catalyses L-seryl-[protein] + ATP = O-phospho-L-seryl-[protein] + ADP + H(+). Its function is as follows. Plays a role in the regulation of the cell cycle by phosphorylating the nuclear envelope protein barrier-to-autointegration factor/BAF that is required for disassembly and reassembly, respectively, of the nuclear envelope during mitosis. Under normal physiological conditions, negatively regulates ERK activity along with VHR phosphatase in the nucleus, causing timely and transient action of ERK. Stress conditions activate CDK5 which phosphorylates VRK3 to increase VHR phosphatase activity and suppress prolonged ERK activation that causes cell death. For example, upon glutamate induction, promotes nuclear localization of HSP70/HSPA1A to inhibit ERK activation via VHR phosphatase. The chain is Serine/threonine-protein kinase VRK3 (Vrk3) from Mus musculus (Mouse).